The sequence spans 416 residues: CBL-interacting serine/threonine-protein kinase 21 (416 aa).

The region spanning 12–264 (YEIGRTIGEG…AEIIIKDSWF (253 aa)) is the Protein kinase domain. ATP-binding positions include 18–26 (IGEGNFAKV) and Lys41. Asp134 serves as the catalytic Proton acceptor. The tract at residues 152-178 (DFGLSAVPKSGDMLSTACGSPCYIAPE) is activation loop. Ser156 bears the Phosphoserine mark. The residue at position 167 (Thr167) is a Phosphothreonine. The NAF domain maps to 291–315 (ASSNFINAFQIIAMSSDLDLSGLFE). The interval 321–351 (RYKTRIGSKNTAQETIKKIEAAATYVSLSVE) is PPI.

Belongs to the protein kinase superfamily. CAMK Ser/Thr protein kinase family. SNF1 subfamily. Interacts with CBL9. Mn(2+) serves as cofactor.

The catalysed reaction is L-seryl-[protein] + ATP = O-phospho-L-seryl-[protein] + ADP + H(+). The enzyme catalyses L-threonyl-[protein] + ATP = O-phospho-L-threonyl-[protein] + ADP + H(+). Its function is as follows. CIPK serine-threonine protein kinases interact with CBL proteins. Binding of a CBL protein to the regulatory NAF domain of CIPK protein lead to the activation of the kinase in a calcium-dependent manner. The polypeptide is CBL-interacting serine/threonine-protein kinase 21 (CIPK21) (Arabidopsis thaliana (Mouse-ear cress)).